The primary structure comprises 309 residues: uncharacterized protein (309 aa).

Pro residues-rich tracts occupy residues 1–17 and 24–51; these read MTSRAPSPPTPPCPSPP and SPVPTATPASPPLKPLSNPLPPPPPTPR. Disordered stretches follow at residues 1–174 and 216–240; these read MTSR…PPGV and PPDLPSPPLSPPLSPPLSPISPLHA. Low complexity predominate over residues 67 to 83; sequence LRSSPSSALNASRGAPS. Positions 84–112 are enriched in pro residues; the sequence is TSPPPSSSPPSSPASTPPSRTPSPTPTAP. Low complexity-rich tracts occupy residues 113–125 and 135–144; these read ASPVASTAMTPAS and APSSSAALSS. The span at 160–174 shows a compositional bias: pro residues; sequence PPPPLPPPLQPPPGV. The chain crosses the membrane as a helical span at residues 278–298; sequence LFLLFTLLSIHFSPFPIFILL.

The protein resides in the host membrane. This is an uncharacterized protein from Vitis vinifera (Grape).